Reading from the N-terminus, the 697-residue chain is Elongation factor G 1 (697 aa).

In terms of domain architecture, tr-type G spans 8–283; that stretch reads ERYRNFGIMA…AVVDFLPSPV (276 aa). GTP-binding positions include 17–24, 81–85, and 135–138; these read AHIDAGKT, DTPGH, and NKMD.

It belongs to the TRAFAC class translation factor GTPase superfamily. Classic translation factor GTPase family. EF-G/EF-2 subfamily.

It is found in the cytoplasm. Its function is as follows. Catalyzes the GTP-dependent ribosomal translocation step during translation elongation. During this step, the ribosome changes from the pre-translocational (PRE) to the post-translocational (POST) state as the newly formed A-site-bound peptidyl-tRNA and P-site-bound deacylated tRNA move to the P and E sites, respectively. Catalyzes the coordinated movement of the two tRNA molecules, the mRNA and conformational changes in the ribosome. The polypeptide is Elongation factor G 1 (Anaeromyxobacter dehalogenans (strain 2CP-C)).